Reading from the N-terminus, the 475-residue chain is ATP-dependent rRNA helicase RRP3 (475 aa).

The interval 30–59 is disordered; the sequence is ALKQKKQAPVTEKPEEIVETTSEASQDVNS. Positions 48–59 are enriched in polar residues; that stretch reads ETTSEASQDVNS. Positions 64–92 match the Q motif motif; the sequence is HTFSELNLVPELMEAIEKLKYTKPTPIQS. Positions 95 to 266 constitute a Helicase ATP-binding domain; sequence IPHALEGKDI…RASLHEPVKV (172 aa). 108-115 serves as a coordination point for ATP; it reads AQTGSGKT. The DEAD box signature appears at 214–217; the sequence is DEAD. Positions 293–437 constitute a Helicase C-terminal domain; it reads FLIHLLNEFM…KDPSPPRDVL (145 aa). The disordered stretch occupies residues 451–475; that stretch reads AIKQTKDFHEKRTKKKRDDRDREER.

Belongs to the DEAD box helicase family. DDX47/RRP3 subfamily.

Its subcellular location is the nucleus. Functionally, required for pre-ribosomal RNA processing. Involved in the maturation of the 35S-pre-rRNA and to its cleavage to mature 18S rRNA. This chain is ATP-dependent rRNA helicase RRP3 (RRP3), found in Meyerozyma guilliermondii (strain ATCC 6260 / CBS 566 / DSM 6381 / JCM 1539 / NBRC 10279 / NRRL Y-324) (Yeast).